Consider the following 154-residue polypeptide: 3-dehydroquinate dehydratase (154 aa).

The Proton acceptor role is filled by Tyr-26. Residues Asn-77, His-83, and Asp-90 each coordinate substrate. His-103 serves as the catalytic Proton donor. Substrate contacts are provided by residues 104-105 (IS) and Arg-114.

It belongs to the type-II 3-dehydroquinase family. Homododecamer.

It catalyses the reaction 3-dehydroquinate = 3-dehydroshikimate + H2O. Its pathway is metabolic intermediate biosynthesis; chorismate biosynthesis; chorismate from D-erythrose 4-phosphate and phosphoenolpyruvate: step 3/7. Its function is as follows. Catalyzes a trans-dehydration via an enolate intermediate. This Buchnera aphidicola subsp. Baizongia pistaciae (strain Bp) protein is 3-dehydroquinate dehydratase.